A 370-amino-acid polypeptide reads, in one-letter code: Protein DVU_0535 (370 aa).

Residues 1–258 are Cytoplasmic-facing; the sequence is MDRRRFLTLL…EELGTKSAPE (258 aa). 3 4Fe-4S ferredoxin-type domains span residues 40 to 70, 101 to 132, and 133 to 162; these read YGVLHDTTRCIGCRKCEQACNEVNKLPAPKA, DHPVFRKQQCNHCLEPACASACFVKAFTKNPD, and GSVTYDGSLCVGCRYCMVACPFNVPAFQYA. Residues cysteine 49, cysteine 52, cysteine 55, cysteine 59, cysteine 110, cysteine 113, cysteine 118, cysteine 122, cysteine 142, cysteine 145, cysteine 148, cysteine 152, cysteine 172, cysteine 175, cysteine 187, and cysteine 191 each contribute to the [4Fe-4S] cluster site. A helical transmembrane segment spans residues 259-284; the sequence is YTAGALGAVPMVVGIWPILLTGAYAI. Over 285–370 the chain is Periplasmic; sequence TKRKEKIAAE…DDAGKPGEDA (86 aa). Basic and acidic residues predominate over residues 345 to 355; it reads FEEELAAKEQP. The disordered stretch occupies residues 345 to 370; it reads FEEELAAKEQPEAPEGDDAGKPGEDA.

The protein localises to the cell membrane. In terms of biological role, HMWC (high-molecular-weight cytochrome c precursor), ORF2, ORF3, ORF4, ORF5, ORF6 in the HMC operon form a transmembrane protein complex that allows electron flow from the periplasmic hydrogenase to the cytoplasmic enzymes that catalyze reduction of sulfates. ORF2 is a transmembrane redox protein. The protein is Protein DVU_0535 of Nitratidesulfovibrio vulgaris (strain ATCC 29579 / DSM 644 / CCUG 34227 / NCIMB 8303 / VKM B-1760 / Hildenborough) (Desulfovibrio vulgaris).